We begin with the raw amino-acid sequence, 215 residues long: Cytochrome b6 (215 aa).

Residues 32 to 52 form a helical membrane-spanning segment; the sequence is IFYCFGGITLTCFLIQVATGF. C35 is a binding site for heme c. Residues H86 and H100 each contribute to the heme b site. 3 consecutive transmembrane segments (helical) span residues 90 to 110, 116 to 136, and 186 to 206; these read ASMM…TGGF, LTWV…VTGY, and LHTF…FLMI. Heme b-binding residues include H187 and H202.

Belongs to the cytochrome b family. PetB subfamily. The 4 large subunits of the cytochrome b6-f complex are cytochrome b6, subunit IV (17 kDa polypeptide, PetD), cytochrome f and the Rieske protein, while the 4 small subunits are PetG, PetL, PetM and PetN. The complex functions as a dimer. The cofactor is heme b. Requires heme c as cofactor.

It localises to the plastid. The protein resides in the chloroplast thylakoid membrane. Component of the cytochrome b6-f complex, which mediates electron transfer between photosystem II (PSII) and photosystem I (PSI), cyclic electron flow around PSI, and state transitions. This chain is Cytochrome b6, found in Nephroselmis olivacea (Green alga).